The primary structure comprises 977 residues: Monofunctional C1-tetrahydrofolate synthase, mitochondrial (977 aa).

The N-terminal 31 residues, 1–31 (MSVRLPLLLRQLGRQQLPSGPACRLRELCRS), are a transit peptide targeting the mitochondrion. A disordered region spans residues 29 to 71 (CRSGSRSSSSGGGDPEGLRGRRLQDGQTFSSHGPGNPEAPGMD). The methylenetetrahydrofolate dehydrogenase and cyclohydrolase stretch occupies residues 32 to 347 (GSRSSSSGGG…REQQHRRWRL (316 aa)). N6-acetyllysine; alternate is present on Lys188. N6-succinyllysine; alternate is present on Lys188. Residues 348 to 977 (HCLKLQPLSP…TETEQVKGLF (630 aa)) are formyltetrahydrofolate synthetase. Phosphoserine is present on Ser356. 422 to 429 (TPLGEGKS) is a binding site for ATP. Lys595 carries the N6-succinyllysine modification.

In the N-terminal section; belongs to the tetrahydrofolate dehydrogenase/cyclohydrolase family. This sequence in the C-terminal section; belongs to the formate--tetrahydrofolate ligase family. In terms of assembly, homodimer.

The protein localises to the mitochondrion. It carries out the reaction (6S)-5,6,7,8-tetrahydrofolate + formate + ATP = (6R)-10-formyltetrahydrofolate + ADP + phosphate. Its pathway is one-carbon metabolism; tetrahydrofolate interconversion. May provide the missing metabolic reaction required to link the mitochondria and the cytoplasm in the mammalian model of one-carbon folate metabolism complementing thus the enzymatic activities of MTHFD2. This chain is Monofunctional C1-tetrahydrofolate synthase, mitochondrial (Mthfd1l), found in Mus musculus (Mouse).